The chain runs to 127 residues: MSIPNNLRYSEEHEWVKTEGNEVVIGITHFAQGELGDIVFVELPEVGATIEADEPFGSVESVKTVSELYAPVSGKVVAVNEELSDQPELVNESPYEGAWMVKVELSDASQVEKLLTAEKYAEMTNQD.

A Lipoyl-binding domain is found at 22–104; sequence EVVIGITHFA…YEGAWMVKVE (83 aa). Lys-63 bears the N6-lipoyllysine mark.

It belongs to the GcvH family. The glycine cleavage system is composed of four proteins: P, T, L and H. It depends on (R)-lipoate as a cofactor.

In terms of biological role, the glycine cleavage system catalyzes the degradation of glycine. The H protein shuttles the methylamine group of glycine from the P protein to the T protein. Functionally, is also involved in protein lipoylation via its role as an octanoyl/lipoyl carrier protein intermediate. The sequence is that of Glycine cleavage system H protein from Bacillus cereus (strain G9842).